The primary structure comprises 873 residues: Cyanophycin synthetase (873 aa).

Positions 224 to 480 (KTILQDAGIP…VAAPVLDMLF (257 aa)) constitute an ATP-grasp domain. 495–501 (GTNGKTT) contacts ATP.

In the C-terminal section; belongs to the MurCDEF family. As to quaternary structure, homodimer.

It catalyses the reaction [L-4-(L-arginin-2-N-yl)aspartate](n) + L-aspartate + ATP = [L-4-(L-arginin-2-N-yl)aspartate](n)-L-aspartate + ADP + phosphate + H(+). The enzyme catalyses [L-4-(L-arginin-2-N-yl)aspartate](n)-L-aspartate + L-arginine + ATP = [L-4-(L-arginin-2-N-yl)aspartate](n+1) + ADP + phosphate + H(+). Its function is as follows. Catalyzes the ATP-dependent polymerization of arginine and aspartate to multi-L-arginyl-poly-L-aspartic acid (cyanophycin; a water-insoluble reserve polymer). The protein is Cyanophycin synthetase (cphA) of Synechocystis sp. (strain ATCC 27184 / PCC 6803 / Kazusa).